A 353-amino-acid chain; its full sequence is Thiamine-phosphate synthase (353 aa).

The tract at residues 1–128 is unknown; the sequence is MELMVVEADA…ASTAAEIRYG (128 aa). Residues 129 to 353 form a thiamine-phosphate synthase region; the sequence is LYDLEVRILE…ASRTLLQTLA (225 aa). Residues 185–189 and asparagine 217 each bind 4-amino-2-methyl-5-(diphosphooxymethyl)pyrimidine; that span reads QYRRK. Mg(2+)-binding residues include aspartate 218 and aspartate 237. Serine 256 contacts 4-amino-2-methyl-5-(diphosphooxymethyl)pyrimidine. 282–284 contributes to the 2-[(2R,5Z)-2-carboxy-4-methylthiazol-5(2H)-ylidene]ethyl phosphate binding site; sequence TKT. Residue lysine 285 participates in 4-amino-2-methyl-5-(diphosphooxymethyl)pyrimidine binding. Residue glycine 312 coordinates 2-[(2R,5Z)-2-carboxy-4-methylthiazol-5(2H)-ylidene]ethyl phosphate.

Belongs to the thiamine-phosphate synthase family. Mg(2+) serves as cofactor.

It catalyses the reaction 2-[(2R,5Z)-2-carboxy-4-methylthiazol-5(2H)-ylidene]ethyl phosphate + 4-amino-2-methyl-5-(diphosphooxymethyl)pyrimidine + 2 H(+) = thiamine phosphate + CO2 + diphosphate. The catalysed reaction is 2-(2-carboxy-4-methylthiazol-5-yl)ethyl phosphate + 4-amino-2-methyl-5-(diphosphooxymethyl)pyrimidine + 2 H(+) = thiamine phosphate + CO2 + diphosphate. The enzyme catalyses 4-methyl-5-(2-phosphooxyethyl)-thiazole + 4-amino-2-methyl-5-(diphosphooxymethyl)pyrimidine + H(+) = thiamine phosphate + diphosphate. It functions in the pathway cofactor biosynthesis; thiamine diphosphate biosynthesis; thiamine phosphate from 4-amino-2-methyl-5-diphosphomethylpyrimidine and 4-methyl-5-(2-phosphoethyl)-thiazole: step 1/1. In terms of biological role, condenses 4-methyl-5-(beta-hydroxyethyl)thiazole monophosphate (THZ-P) and 2-methyl-4-amino-5-hydroxymethyl pyrimidine pyrophosphate (HMP-PP) to form thiamine monophosphate (TMP). The polypeptide is Thiamine-phosphate synthase (Synechococcus sp. (strain CC9311)).